Consider the following 296-residue polypeptide: ATP synthase gamma chain (296 aa).

The protein belongs to the ATPase gamma chain family. As to quaternary structure, F-type ATPases have 2 components, CF(1) - the catalytic core - and CF(0) - the membrane proton channel. CF(1) has five subunits: alpha(3), beta(3), gamma(1), delta(1), epsilon(1). CF(0) has three main subunits: a, b and c.

The protein resides in the cell membrane. Its function is as follows. Produces ATP from ADP in the presence of a proton gradient across the membrane. The gamma chain is believed to be important in regulating ATPase activity and the flow of protons through the CF(0) complex. This chain is ATP synthase gamma chain, found in Pseudarthrobacter chlorophenolicus (strain ATCC 700700 / DSM 12829 / CIP 107037 / JCM 12360 / KCTC 9906 / NCIMB 13794 / A6) (Arthrobacter chlorophenolicus).